Here is a 347-residue protein sequence, read N- to C-terminus: S-adenosylmethionine:tRNA ribosyltransferase-isomerase (347 aa).

It belongs to the QueA family. Monomer.

It is found in the cytoplasm. The enzyme catalyses 7-aminomethyl-7-carbaguanosine(34) in tRNA + S-adenosyl-L-methionine = epoxyqueuosine(34) in tRNA + adenine + L-methionine + 2 H(+). The protein operates within tRNA modification; tRNA-queuosine biosynthesis. Its function is as follows. Transfers and isomerizes the ribose moiety from AdoMet to the 7-aminomethyl group of 7-deazaguanine (preQ1-tRNA) to give epoxyqueuosine (oQ-tRNA). The protein is S-adenosylmethionine:tRNA ribosyltransferase-isomerase of Exiguobacterium sibiricum (strain DSM 17290 / CCUG 55495 / CIP 109462 / JCM 13490 / 255-15).